The primary structure comprises 608 residues: MGKIRKLDDALANKIAAGEVVERPASVVKELVENAIDAHSTIIEVELEEAGLAKIRVVDNGDGFEEEDCFLAFERHATSKIKDEADLFRIRTLGFRGEALPSIASVSHLELKTSTGEGPGTWLVLKGGELVQHGRTSSRKGTDITVSHLFFNTPARLKYMKTIHTELGHVVDVINRLALAHPHISFRLTHNGKQLFYTNGNGDVRQVLAAIYGLDVAKKMIAIHAETLDFTIDGYVALPEVTRASRNYMTTIVNGRYIKNYSLYKAIEEGYHTLLPIGRHPITFLNIMMDPLLIDVNVHPAKLEVRFSKETELNELVQQTIRQSFQKKTLIPEVTAPRVEKTKAEQQTFSFEHIVKESNTMSPRVTEIHRDQEKKTEERIVLEKSDEHVRDQDVTLLDVESVVPSEHVTGEMDQERIPPLYPIGQMHGTYILAQNENGLYIIDQHAAQERIKYEYFREKLATVTNELQPLLIPLTLTYSSSEYLLIESYRDQLAACGVFLEPFGHNSFIVRSHPQWFPKGEEVAIIEEMIKQVLEMKKVDMKQLREKAAIMMSCKQSIKANQFLRNDEIFALLESLRKTSDPFTCPHGRPIIIHFSTYELEKMFKRVM.

It belongs to the DNA mismatch repair MutL/HexB family.

Its function is as follows. This protein is involved in the repair of mismatches in DNA. It is required for dam-dependent methyl-directed DNA mismatch repair. May act as a 'molecular matchmaker', a protein that promotes the formation of a stable complex between two or more DNA-binding proteins in an ATP-dependent manner without itself being part of a final effector complex. The protein is DNA mismatch repair protein MutL of Anoxybacillus flavithermus (strain DSM 21510 / WK1).